The following is a 354-amino-acid chain: Diaminopimelate epimerase, chloroplastic (354 aa).

The transit peptide at 1–44 (MSSATAAATATIAAAAAKLAATPAPAPSRRRLTLRGNPTARRCV) directs the protein to the chloroplast. Catalysis depends on residues Cys-142 and Cys-297.

The protein belongs to the diaminopimelate epimerase family.

The protein resides in the plastid. It is found in the chloroplast. The enzyme catalyses (2S,6S)-2,6-diaminopimelate = meso-2,6-diaminopimelate. Its pathway is amino-acid biosynthesis; L-lysine biosynthesis via DAP pathway; DL-2,6-diaminopimelate from LL-2,6-diaminopimelate: step 1/1. The polypeptide is Diaminopimelate epimerase, chloroplastic (DAPF) (Oryza sativa subsp. japonica (Rice)).